Here is a 165-residue protein sequence, read N- to C-terminus: MNQHYFNLLGNITWLWMNSPLHREWSCELLARNVIPAIENQQYMLLIDNDVPIAYCSWADLSLETEVKYIKDISSLTPEEWQSGDRRWIIDWVAPFGHSQLLIKNVSEIPDYSRQIYTLLSKTKRTGKIAYFKGGNLDKKTAKKRFDTYQERLGAALKNEFNFTK.

Catalysis depends on residues H22 and D91.

It belongs to the RTX toxin acyltransferase family.

The protein resides in the cytoplasm. The catalysed reaction is a fatty acyl-[ACP] + L-lysyl-[protein] = N(6)-(fatty acyl)-L-lysyl-[protein] + holo-[ACP] + H(+). Functionally, involved in fatty acylation of the protoxin (LktA) at two internal lysine residues, thereby converting it to the active toxin. This is Leukotoxin-activating lysine-acyltransferase LktC (lktC) from Pasteurella haemolytica-like sp. (strain 5943B).